The following is a 480-amino-acid chain: NADH-quinone oxidoreductase subunit N 1 (480 aa).

A run of 14 helical transmembrane segments spans residues 12-32 (LSMP…IGVF), 38-58 (TPTV…WLVL), 78-98 (FMKV…VGHA), 106-126 (FEFP…ISAN), 128-148 (LISL…VAAI), 163-183 (FVLG…VYGF), 203-223 (LGLV…ISAV), 241-261 (TAFF…RIVI), 271-291 (WQQI…FAAI), 303-323 (SSIG…MAGV), 326-346 (VILY…CILA), 372-392 (ATVL…AGFF), 396-416 (FVFV…GVLA), and 449-469 (LVFG…GPLG).

It belongs to the complex I subunit 2 family. NDH-1 is composed of 14 different subunits. Subunits NuoA, H, J, K, L, M, N constitute the membrane sector of the complex.

It is found in the cell inner membrane. The enzyme catalyses a quinone + NADH + 5 H(+)(in) = a quinol + NAD(+) + 4 H(+)(out). NDH-1 shuttles electrons from NADH, via FMN and iron-sulfur (Fe-S) centers, to quinones in the respiratory chain. The immediate electron acceptor for the enzyme in this species is believed to be ubiquinone. Couples the redox reaction to proton translocation (for every two electrons transferred, four hydrogen ions are translocated across the cytoplasmic membrane), and thus conserves the redox energy in a proton gradient. The sequence is that of NADH-quinone oxidoreductase subunit N 1 from Rhizobium meliloti (strain 1021) (Ensifer meliloti).